Here is a 303-residue protein sequence, read N- to C-terminus: Probable 5-dehydro-4-deoxyglucarate dehydratase (303 aa).

This sequence belongs to the DapA family.

The enzyme catalyses 5-dehydro-4-deoxy-D-glucarate + H(+) = 2,5-dioxopentanoate + CO2 + H2O. It functions in the pathway carbohydrate acid metabolism; D-glucarate degradation; 2,5-dioxopentanoate from D-glucarate: step 2/2. This is Probable 5-dehydro-4-deoxyglucarate dehydratase from Azotobacter vinelandii (strain DJ / ATCC BAA-1303).